The chain runs to 320 residues: Mitochondrial fission regulator 1-like-B (320 aa).

The segment at 1–37 (MASLGAAAEPERSLFGKDGAEACESPEGRRSGRRKRT) is disordered. Residues 9–30 (EPERSLFGKDGAEACESPEGRR) show a composition bias toward basic and acidic residues.

The protein belongs to the MTFR1 family.

Its subcellular location is the mitochondrion outer membrane. Functionally, mitochondrial protein required for adaptation of miochondrial dynamics to metabolic changes. Regulates mitochondrial morphology at steady state and mediates AMPK-dependent stress-induced mitochondrial fragmentation via the control of OPA1 levels. This Xenopus laevis (African clawed frog) protein is Mitochondrial fission regulator 1-like-B (mtfr1l-b).